Reading from the N-terminus, the 57-residue chain is Lantibiotic nisin-A (57 aa).

A propeptide spanning residues 1-23 (MSTKDFNLDLVSVSKKDSGASPR) is cleaved from the precursor. T25 is subject to (Z)-2,3-didehydrobutyrine. Residues 26–30 (SISLC) constitute a cross-link (lanthionine (Ser-Cys)). S28 carries the 2,3-didehydroalanine (Ser) modification. 4 consecutive cross-links (beta-methyllanthionine (Thr-Cys)) follow at residues 31–34 (TPGC), 36–42 (TGALMGC), 46–49 (TATC), and 48–51 (TCHC). A 2,3-didehydroalanine (Ser) modification is found at S56.

Belongs to the type A lantibiotic family. Maturation of lantibiotics involves the enzymatic conversion of Thr, and Ser into dehydrated AA and the formation of thioether bonds with cysteine. This is followed by membrane translocation and cleavage of the modified precursor. Post-translationally, the structure of the 2,3-didehydrobutyrine is not discussed in PubMed:8454055. However, in Fig. 1 the residue is diagrammed as the Z-isomer.

Lanthionine-containing peptide antibiotic (lantibiotic) active on Gram-positive bacteria. The bactericidal activity of lantibiotics is based on depolarization of energized bacterial cytoplasmic membranes, initiated by the formation of aqueous transmembrane pores. This chain is Lantibiotic nisin-A (spaN), found in Lactococcus lactis subsp. lactis (Streptococcus lactis).